The chain runs to 1547 residues: ABC multidrug transporter atrF (1547 aa).

Disordered regions lie at residues 1–66 (MADG…RRGA) and 85–123 (TRSV…IDGD). A compositionally biased stretch (polar residues) spans 10–19 (SATSTTMETN). Residues 36 to 47 (SSSMTATSSELS) are compositionally biased toward low complexity. The segment covering 51–66 (RWGERDQGEPVSRRGA) has biased composition (basic and acidic residues). The span at 111–123 (KAIDEEDSTIDGD) shows a compositional bias: acidic residues. The region spanning 197–439 (IPQLRFGKQP…FVNLGFHCPE (243 aa)) is the ABC transporter 1 domain. 2 N-linked (GlcNAc...) asparagine glycosylation sites follow: asparagine 299 and asparagine 363. Helical transmembrane passes span 552-572 (LYTK…LFYG), 586-606 (ALFF…MPAV), 635-655 (FPAI…MTGL), 657-677 (VTAS…FSIT), 698-718 (GIAL…QGLI), 722-742 (IWFG…AVLT), and 804-824 (FGVV…AAEF). An ABC transporter 2 domain is found at 892–1130 (FTWSNVEYTV…DVIKYFADRG (239 aa)). The N-linked (GlcNAc...) asparagine glycan is linked to asparagine 905. 928-935 (GASGAGKT) serves as a coordination point for ATP. 2 N-linked (GlcNAc...) asparagine glycosylation sites follow: asparagine 980 and asparagine 999. The next 8 membrane-spanning stretches (helical) occupy residues 1230–1250 (FVSV…GNSI), 1260–1280 (IFLI…KFYI), 1309–1329 (IPMA…PVGF), 1334–1354 (STAG…SSWG), 1356–1376 (WICA…FFFV), 1397–1417 (YWMY…SSIF), 1491–1511 (CFGI…FFIY), and 1520–1540 (FGMG…KGVF).

Belongs to the ABC transporter superfamily. ABCG family. PDR (TC 3.A.1.205) subfamily.

It is found in the cell membrane. It carries out the reaction voriconazole(in) + ATP + H2O = voriconazole(out) + ADP + phosphate + H(+). It catalyses the reaction fluconazole(in) + ATP + H2O = fluconazole(out) + ADP + phosphate + H(+). Pleiotropic ABC efflux transporter involved in the basal level of azole susceptibility. Confers resistance to fluconazole and voriconazole. The chain is ABC multidrug transporter atrF from Aspergillus fumigatus (strain ATCC MYA-4609 / CBS 101355 / FGSC A1100 / Af293) (Neosartorya fumigata).